We begin with the raw amino-acid sequence, 595 residues long: Threonine dehydratase 2 biosynthetic, chloroplastic (595 aa).

Residues methionine 1–leucine 51 constitute a chloroplast transit peptide. Lysine 143 is modified (N6-(pyridoxal phosphate)lysine). 2 consecutive ACT-like domains span residues alanine 420 to histidine 492 and isoleucine 514 to tyrosine 585.

This sequence belongs to the serine/threonine dehydratase family. In terms of assembly, homotetramer. Pyridoxal 5'-phosphate is required as a cofactor. In terms of processing, proteolytically cleaved by a chymotrypsin-like digestive protease in the midgut of the lepidopteran insects to remove the C-terminal regulatory domain, which allows efficient metabolizing of threonine in the presence of high isoleucine levels in the gut. Expressed in floral buds, 8-9 mm long flowers 1 to 2 days before anthesis, open flowers and floral organs including sepals, petals, stamens and carpels of 8-9 mm flowers (at protein level). Expressed in very early floral meristems of the anantha. Over 500-fold expression in mature flowers compared to leaves. Expressed in sepals, petals, stamens and carpels of the mature flower. In sepals, mostly expressed in the abaxial mesophyll cells and in petals in parenchymal cells. Not expressed in epidermal or vascular tissues of sepals and petals. In stamens, expressed in parenchymal cells of the connective and lobes, but not expressed in differentiated tissues such as tapetum (TP), stomium (SM), or pollen grains (PG). Not expressed in roots or seeds. High level of expression in immature flower buds, unopened flowers and opened flowers. Not expressed in unstressed leaves, root, stem or petiole.

It localises to the plastid. Its subcellular location is the chloroplast. It catalyses the reaction L-threonine = 2-oxobutanoate + NH4(+). It carries out the reaction L-serine = pyruvate + NH4(+). It functions in the pathway amino-acid biosynthesis; L-isoleucine biosynthesis; 2-oxobutanoate from L-threonine: step 1/1. Its activity is regulated as follows. Threonine dehydratase 2 biosynthetic, chloroplastic: Strongly inhibited by 1 mM isoleucine. Processed threonine dehydratase 2: Not inhibited by isoleucine. Its function is as follows. Not required for normal growth and development of the plant. Involved in defense against lepidopteran, but not coleopteran herbivore insects. Acts in the insect gut to degrade threonine, which is an essential and limiting nutrient for the growth of lepidopteran larvae. Active against both L-threonine and L-serine. The polypeptide is Threonine dehydratase 2 biosynthetic, chloroplastic (Solanum lycopersicum (Tomato)).